Here is a 184-residue protein sequence, read N- to C-terminus: Peptide deformylase (184 aa).

Positions 96 and 138 each coordinate Fe cation. The active site involves Glu-139. His-142 provides a ligand contact to Fe cation.

This sequence belongs to the polypeptide deformylase family. It depends on Fe(2+) as a cofactor.

It carries out the reaction N-terminal N-formyl-L-methionyl-[peptide] + H2O = N-terminal L-methionyl-[peptide] + formate. Removes the formyl group from the N-terminal Met of newly synthesized proteins. Requires at least a dipeptide for an efficient rate of reaction. N-terminal L-methionine is a prerequisite for activity but the enzyme has broad specificity at other positions. This is Peptide deformylase from Cytophaga hutchinsonii (strain ATCC 33406 / DSM 1761 / CIP 103989 / NBRC 15051 / NCIMB 9469 / D465).